The following is a 255-amino-acid chain: Probable transcriptional regulatory protein CMM_1817 (255 aa).

It belongs to the TACO1 family.

The protein resides in the cytoplasm. This is Probable transcriptional regulatory protein CMM_1817 from Clavibacter michiganensis subsp. michiganensis (strain NCPPB 382).